Here is a 104-residue protein sequence, read N- to C-terminus: Ribonuclease P protein component 4 (104 aa).

Residues Cys57, Cys60, Cys83, and Cys86 each contribute to the Zn(2+) site.

This sequence belongs to the eukaryotic/archaeal RNase P protein component 4 family. Consists of a catalytic RNA component and at least 4-5 protein subunits. Zn(2+) is required as a cofactor.

It is found in the cytoplasm. The catalysed reaction is Endonucleolytic cleavage of RNA, removing 5'-extranucleotides from tRNA precursor.. Functionally, part of ribonuclease P, a protein complex that generates mature tRNA molecules by cleaving their 5'-ends. In Saccharolobus islandicus (strain M.14.25 / Kamchatka #1) (Sulfolobus islandicus), this protein is Ribonuclease P protein component 4.